Here is a 306-residue protein sequence, read N- to C-terminus: Low-density lipoprotein receptor class A domain-containing protein 4 (306 aa).

At 1–64 (MPEAGFQATN…PPGIFNSELE (64 aa)) the chain is on the lumenal side. The LDL-receptor class A domain occupies 11-48 (AFTECKFTCTSGKCLYLGSLVCNQQNDCGDNSDEENCL). Disulfide bonds link C19–C38 and C32–C47. Residues 65–85 (FAQILIIVVVVTVMVVVVVCL) traverse the membrane as a helical segment. At 86–306 (LNHYKVSTRS…GKDRKPGDLV (221 aa)) the chain is on the cytoplasmic side. The segment at 100-127 (PNQSQRQEDGLQPEGSLWPSDSSVQRPG) is disordered. The PPxY motif 1 motif lies at 180-183 (PPPY). The SMAD interaction motif (SIM) signature appears at 208-211 (PPNR). The PPxY motif 2 motif lies at 252 to 255 (PPTY). The segment at 268–306 (FHHQHSNTHRGSRPQFQPNNSEGTIVPIKGKDRKPGDLV) is disordered. Residues 269-279 (HHQHSNTHRGS) are compositionally biased toward basic residues. Residues 281-290 (PQFQPNNSEG) show a composition bias toward polar residues. Basic and acidic residues predominate over residues 296–306 (KGKDRKPGDLV).

It belongs to the PMEPA1 family. Interacts with PMEPA1. Interacts (via the SMAD interaction motif) with SMAD2 and SMAD3. In terms of tissue distribution, detected in all tissues tested.

It localises to the early endosome membrane. Its function is as follows. Functions as a negative regulator of TGF-beta signaling and thereby probably plays a role in cell proliferation, differentiation, apoptosis, motility, extracellular matrix production and immunosuppression. In the canonical TGF-beta pathway, ZFYVE9/SARA recruits the intracellular signal transducer and transcriptional modulators SMAD2 and SMAD3 to the TGF-beta receptor. Phosphorylated by the receptor, SMAD2 and SMAD3 then form a heteromeric complex with SMAD4 that translocates to the nucleus to regulate transcription. Through interaction with SMAD2 and SMAD3, LDLRAD4 may compete with ZFYVE9 and SMAD4 and prevent propagation of the intracellular signal. In Mus musculus (Mouse), this protein is Low-density lipoprotein receptor class A domain-containing protein 4 (Ldlrad4).